The following is a 335-amino-acid chain: Glyceraldehyde-3-phosphate dehydrogenase 1 (335 aa).

NAD(+)-binding positions include 13 to 14 and glycine 111; that span reads TI. 140–142 contributes to the D-glyceraldehyde 3-phosphate binding site; that stretch reads SCN. Catalysis depends on cysteine 141, which acts as the Nucleophile. Arginine 169 is a binding site for NAD(+). D-glyceraldehyde 3-phosphate is bound by residues threonine 171 and 195 to 196; that span reads HG. NAD(+) is bound at residue glutamine 300.

This sequence belongs to the glyceraldehyde-3-phosphate dehydrogenase family. In terms of assembly, homotetramer.

It is found in the cytoplasm. The enzyme catalyses D-glyceraldehyde 3-phosphate + phosphate + NADP(+) = (2R)-3-phospho-glyceroyl phosphate + NADPH + H(+). The catalysed reaction is D-glyceraldehyde 3-phosphate + phosphate + NAD(+) = (2R)-3-phospho-glyceroyl phosphate + NADH + H(+). The protein operates within carbohydrate degradation; glycolysis; pyruvate from D-glyceraldehyde 3-phosphate: step 1/5. In Methanosarcina acetivorans (strain ATCC 35395 / DSM 2834 / JCM 12185 / C2A), this protein is Glyceraldehyde-3-phosphate dehydrogenase 1 (gapA).